The chain runs to 148 residues: 3-dehydroquinate dehydratase (148 aa).

The Proton acceptor role is filled by Y24. 3 residues coordinate substrate: N75, H81, and D88. The active-site Proton donor is H101. Substrate-binding positions include 102-103 (LS) and R112.

The protein belongs to the type-II 3-dehydroquinase family. Homododecamer.

The enzyme catalyses 3-dehydroquinate = 3-dehydroshikimate + H2O. It participates in metabolic intermediate biosynthesis; chorismate biosynthesis; chorismate from D-erythrose 4-phosphate and phosphoenolpyruvate: step 3/7. Its function is as follows. Catalyzes a trans-dehydration via an enolate intermediate. The chain is 3-dehydroquinate dehydratase from Sinorhizobium medicae (strain WSM419) (Ensifer medicae).